We begin with the raw amino-acid sequence, 468 residues long: MKLPEKLGPIHFIGIGGIGMSGIAEVMANLGYTVQGSDANDNANVRRLSENGIRTFVGHRAENVENAALVVVSTAIRRDNPELIEARERRLPVVRRAEMLAELMRFKSCVAVAGTHGKTTTTSLVATLLDAGNLDPTVINGGIINAYGTNARMGAGDWMVVEADESDGTFLKLPADVAIVTNIDPEHLDHFGSFDAIKDAFRRFIDNIPFYGFAVMCIDHPIVQDLVGHIEDRRIITYGENPQADVRLIDIDLKGGQSRFRVMIRDRRPGFRLEMQDLVLPMPGRHNALNATAALAVAHELGVSEDAIRKALAGFGGVKRRFTRTGEWNGAAIFDDYGHHPVEIAAVLRAARSSTDGKVIAVVQPHRYTRLQSLFEDFCTCFNDADTVIVAPVYAAGEAPIEGIDRDSLIAGLKARGHRDAVALERPEDLARLVSGRAEPNDYVVCLGAGTITQWAYALPGELAALKG.

Residue 114 to 120 (GTHGKTT) coordinates ATP.

It belongs to the MurCDEF family.

The protein resides in the cytoplasm. It catalyses the reaction UDP-N-acetyl-alpha-D-muramate + L-alanine + ATP = UDP-N-acetyl-alpha-D-muramoyl-L-alanine + ADP + phosphate + H(+). It functions in the pathway cell wall biogenesis; peptidoglycan biosynthesis. Its function is as follows. Cell wall formation. In Methylorubrum populi (strain ATCC BAA-705 / NCIMB 13946 / BJ001) (Methylobacterium populi), this protein is UDP-N-acetylmuramate--L-alanine ligase.